The following is a 124-amino-acid chain: Large ribosomal subunit protein bL21 (124 aa).

Belongs to the bacterial ribosomal protein bL21 family. Part of the 50S ribosomal subunit. Contacts protein L20.

Its function is as follows. This protein binds to 23S rRNA in the presence of protein L20. In Synechocystis sp. (strain ATCC 27184 / PCC 6803 / Kazusa), this protein is Large ribosomal subunit protein bL21.